The sequence spans 477 residues: UDP-N-acetylmuramate--L-alanine ligase (477 aa).

122 to 128 (GTHGKTT) serves as a coordination point for ATP.

It belongs to the MurCDEF family.

It localises to the cytoplasm. It catalyses the reaction UDP-N-acetyl-alpha-D-muramate + L-alanine + ATP = UDP-N-acetyl-alpha-D-muramoyl-L-alanine + ADP + phosphate + H(+). It participates in cell wall biogenesis; peptidoglycan biosynthesis. In terms of biological role, cell wall formation. This chain is UDP-N-acetylmuramate--L-alanine ligase, found in Xanthomonas oryzae pv. oryzae (strain MAFF 311018).